The sequence spans 417 residues: UDP-N-acetylglucosamine 1-carboxyvinyltransferase 2 (417 aa).

22–23 lines the phosphoenolpyruvate pocket; it reads KN. Arg92 contacts UDP-N-acetyl-alpha-D-glucosamine. Cys116 acts as the Proton donor in catalysis. Cys116 carries the 2-(S-cysteinyl)pyruvic acid O-phosphothioketal modification. UDP-N-acetyl-alpha-D-glucosamine-binding positions include 121–125, Asp305, and Ile327; that span reads RPIDL.

This sequence belongs to the EPSP synthase family. MurA subfamily.

Its subcellular location is the cytoplasm. It carries out the reaction phosphoenolpyruvate + UDP-N-acetyl-alpha-D-glucosamine = UDP-N-acetyl-3-O-(1-carboxyvinyl)-alpha-D-glucosamine + phosphate. The protein operates within cell wall biogenesis; peptidoglycan biosynthesis. Functionally, cell wall formation. Adds enolpyruvyl to UDP-N-acetylglucosamine. The chain is UDP-N-acetylglucosamine 1-carboxyvinyltransferase 2 from Caldanaerobacter subterraneus subsp. tengcongensis (strain DSM 15242 / JCM 11007 / NBRC 100824 / MB4) (Thermoanaerobacter tengcongensis).